The primary structure comprises 308 residues: HPr kinase/phosphorylase (308 aa).

Residues His138 and Lys159 contribute to the active site. 153–160 is an ATP binding site; that stretch reads GESGLGKS. Ser160 contributes to the Mg(2+) binding site. The active-site Proton acceptor; for phosphorylation activity. Proton donor; for dephosphorylation activity is Asp177. The tract at residues 201–210 is important for the catalytic mechanism of both phosphorylation and dephosphorylation; that stretch reads LEVRGLGLLD. Residue Glu202 coordinates Mg(2+). The active site involves Arg243. Residues 264 to 269 are important for the catalytic mechanism of dephosphorylation; that stretch reads QVAAGR.

The protein belongs to the HPrK/P family. In terms of assembly, homohexamer. It depends on Mg(2+) as a cofactor.

The catalysed reaction is [HPr protein]-L-serine + ATP = [HPr protein]-O-phospho-L-serine + ADP + H(+). It carries out the reaction [HPr protein]-O-phospho-L-serine + phosphate + H(+) = [HPr protein]-L-serine + diphosphate. Catalyzes the ATP- as well as the pyrophosphate-dependent phosphorylation of a specific serine residue in HPr, a phosphocarrier protein of the phosphoenolpyruvate-dependent sugar phosphotransferase system (PTS). HprK/P also catalyzes the pyrophosphate-producing, inorganic phosphate-dependent dephosphorylation (phosphorolysis) of seryl-phosphorylated HPr (P-Ser-HPr). This Bordetella pertussis (strain Tohama I / ATCC BAA-589 / NCTC 13251) protein is HPr kinase/phosphorylase.